Consider the following 387-residue polypeptide: Putative purine permease 15 (387 aa).

The next 10 membrane-spanning stretches (helical) occupy residues 44 to 64, 84 to 104, 122 to 142, 150 to 169, 179 to 199, 210 to 230, 252 to 272, 306 to 326, 329 to 349, and 354 to 374; these read WVTI…ARLL, TLLQ…HFLI, LAIT…FSDV, VFTL…SKYY, FISL…FSAG, YGII…LCII, FVVV…ILVA, VAWQ…SAVF, VISV…YNTH, and VFRG…IYII.

It belongs to the purine permeases (TC 2.A.7.14) family.

It is found in the membrane. This chain is Putative purine permease 15 (PUP15), found in Arabidopsis thaliana (Mouse-ear cress).